The chain runs to 893 residues: Alanine--tRNA ligase (893 aa).

The Zn(2+) site is built by His573, His577, Cys676, and His680. The disordered stretch occupies residues Leu853–Ser872.

The protein belongs to the class-II aminoacyl-tRNA synthetase family. Zn(2+) serves as cofactor.

The protein resides in the cytoplasm. It carries out the reaction tRNA(Ala) + L-alanine + ATP = L-alanyl-tRNA(Ala) + AMP + diphosphate. Functionally, catalyzes the attachment of alanine to tRNA(Ala) in a two-step reaction: alanine is first activated by ATP to form Ala-AMP and then transferred to the acceptor end of tRNA(Ala). Also edits incorrectly charged Ser-tRNA(Ala) and Gly-tRNA(Ala) via its editing domain. The chain is Alanine--tRNA ligase from Kineococcus radiotolerans (strain ATCC BAA-149 / DSM 14245 / SRS30216).